The chain runs to 274 residues: Undecaprenyl-diphosphatase 2 (274 aa).

6 helical membrane passes run 47-64 (VFVI…CWEY), 82-102 (WKFV…GLTF), 110-130 (LFSP…ILWA), 185-205 (ATEF…LYDL), 219-239 (LMAV…RGLI), and 249-269 (VFAW…WSGL).

This sequence belongs to the UppP family.

It localises to the cell inner membrane. It catalyses the reaction di-trans,octa-cis-undecaprenyl diphosphate + H2O = di-trans,octa-cis-undecaprenyl phosphate + phosphate + H(+). Functionally, catalyzes the dephosphorylation of undecaprenyl diphosphate (UPP). Confers resistance to bacitracin. The sequence is that of Undecaprenyl-diphosphatase 2 from Rhodospirillum rubrum (strain ATCC 11170 / ATH 1.1.1 / DSM 467 / LMG 4362 / NCIMB 8255 / S1).